Reading from the N-terminus, the 348-residue chain is Selenide, water dikinase (348 aa).

The active site involves C17. Residues K20 and 48-50 (TRD) each bind ATP. Mg(2+) is bound at residue D51. Residues D68, D91, and 139–141 (GHS) each bind ATP. D91 is a Mg(2+) binding site. A Mg(2+)-binding site is contributed by D227.

This sequence belongs to the selenophosphate synthase 1 family. Class I subfamily. In terms of assembly, homodimer. Mg(2+) is required as a cofactor.

It carries out the reaction hydrogenselenide + ATP + H2O = selenophosphate + AMP + phosphate + 2 H(+). Synthesizes selenophosphate from selenide and ATP. The protein is Selenide, water dikinase of Yersinia pestis.